The following is a 147-amino-acid chain: uncharacterized protein (147 aa).

The next 2 membrane-spanning stretches (helical) occupy residues Y4 to G26 and Y123 to F145.

The protein localises to the cell membrane. This is an uncharacterized protein from Treponema pallidum (strain Nichols).